Here is a 265-residue protein sequence, read N- to C-terminus: MDNLTKVREYLKSYSRLDQAVGEIDEIEAQRAEKSNYELFQEDGVEEHTKPSYFQAADDSDTESEPEIEDNQGLYAQDPEAEQVEGFIQGPLDDYADEEVDVVFTSDWKPPELESDEHGKTLRLTSPEGLSGEQKSQWLSTIKAVVQSAKYWNLAECTFEASGEGVIMKERQITPDVYKVTPVMNTHPSQSEAVSDVWSLSKTSMTFQPKKASLQPLTISLDELFSSRGEFISVGGDGRMSHKEAILLGLRYKKLYNQARVKYSL.

The tract at residues 1-60 is interaction with N(0); the sequence is MDNLTKVREYLKSYSRLDQAVGEIDEIEAQRAEKSNYELFQEDGVEEHTKPSYFQAADDS. Position 14 is a phosphotyrosine; by host (Y14). The interval 35–77 is disordered; that stretch reads SNYELFQEDGVEEHTKPSYFQAADDSDTESEPEIEDNQGLYAQ. The segment at 49–105 is interaction with the L polymerase; the sequence is TKPSYFQAADDSDTESEPEIEDNQGLYAQDPEAEQVEGFIQGPLDDYADEEVDVVFT. Residues 58 to 70 show a composition bias toward acidic residues; it reads DDSDTESEPEIED. Residue S60 is modified to Phosphoserine; by host CK2. The residue at position 62 (T62) is a Phosphothreonine; by host CK2. A Phosphoserine; by host CK2 modification is found at S64. Residues 109–170 are oligomerization; that stretch reads KPPELESDEH…ASGEGVIMKE (62 aa). A hinge region spans residues 171–193; sequence RQITPDVYKVTPVMNTHPSQSEA. Residues S226 and S227 each carry the phosphoserine; by host modification. Position 233 is a phosphoserine (S233). The segment at 245-265 is interaction with the Nucleoprotein-RNA and template-binding; that stretch reads AILLGLRYKKLYNQARVKYSL.

Belongs to the vesiculovirus protein P family. In terms of assembly, homodimer. Interacts with the L polymerase; the association of P and L forms the polymerase complex and positions P optimally for encapsidation of newly synthesized genomes with the nucleoprotein. Interacts (via N-terminus) with N(0). Interacts (via C-terminus) with N in ribonucleocapsid (via C-terminus); this interaction allows to package the L polymerase in the virion and positions the polymerase on the template, since P acts as a bridge between N and L. Phosphorylated in the N-terminus by host CK2. Phosphorylation of the phosphoprotein is required for the transcriptional function of the P-L complex.

The protein resides in the virion. Its subcellular location is the host cytoplasm. Functionally, nonenzymatic cofactor regulating the function and conformation of the RNA polymerase and part of the transcription and replication complex. Binds the viral ribonucleocapsid and positions the L polymerase on the template. Acts as a chaperone for newly synthesized free N protein, so-called N(0). Plays a role in virion assembly by acting as a bridge between N and L. The sequence is that of Phosphoprotein (P) from Vesicular stomatitis Indiana virus (strain San Juan) (VSIV).